The chain runs to 90 residues: Probable Fe(2+)-trafficking protein (90 aa).

This sequence belongs to the Fe(2+)-trafficking protein family.

In terms of biological role, could be a mediator in iron transactions between iron acquisition and iron-requiring processes, such as synthesis and/or repair of Fe-S clusters in biosynthetic enzymes. This Pseudomonas putida (strain ATCC 700007 / DSM 6899 / JCM 31910 / BCRC 17059 / LMG 24140 / F1) protein is Probable Fe(2+)-trafficking protein.